The sequence spans 115 residues: Basic leucine zipper transcriptional factor ATF-like (115 aa).

The tract at residues 1-57 is disordered; the sequence is MQQEPDRNEQGYCSSPPSSNKQDSSDDTKKIQRREKNRIAAQKSRQRQTQKADSLHI. Residues 27-90 form the bZIP domain; sequence DTKKIQRREK…KYLTCVLSTH (64 aa). The basic motif stretch occupies residues 29–51; it reads KKIQRREKNRIAAQKSRQRQTQK. Residues 55–83 are leucine-zipper; the sequence is LHIESENLERLNSALRGEISGLREELKYL.

The protein belongs to the bZIP family.

It localises to the nucleus. The protein resides in the cytoplasm. In terms of biological role, AP-1 family transcription factor that controls the differentiation of lineage-specific cells in the immune system: specifically mediates the differentiation of T-helper 17 cells (Th17), follicular T-helper cells (TfH), CD8(+) dendritic cells and class-switch recombination (CSR) in B-cells. The polypeptide is Basic leucine zipper transcriptional factor ATF-like (batf) (Xenopus tropicalis (Western clawed frog)).